Here is a 172-residue protein sequence, read N- to C-terminus: 3-hydroxydecanoyl-[acyl-carrier-protein] dehydratase (172 aa).

Residue H71 is part of the active site.

This sequence belongs to the thioester dehydratase family. FabA subfamily. Homodimer.

It localises to the cytoplasm. The enzyme catalyses a (3R)-hydroxyacyl-[ACP] = a (2E)-enoyl-[ACP] + H2O. It carries out the reaction (3R)-hydroxydecanoyl-[ACP] = (2E)-decenoyl-[ACP] + H2O. It catalyses the reaction (2E)-decenoyl-[ACP] = (3Z)-decenoyl-[ACP]. The protein operates within lipid metabolism; fatty acid biosynthesis. Necessary for the introduction of cis unsaturation into fatty acids. Catalyzes the dehydration of (3R)-3-hydroxydecanoyl-ACP to E-(2)-decenoyl-ACP and then its isomerization to Z-(3)-decenoyl-ACP. Can catalyze the dehydratase reaction for beta-hydroxyacyl-ACPs with saturated chain lengths up to 16:0, being most active on intermediate chain length. This Pectobacterium atrosepticum (strain SCRI 1043 / ATCC BAA-672) (Erwinia carotovora subsp. atroseptica) protein is 3-hydroxydecanoyl-[acyl-carrier-protein] dehydratase.